Consider the following 190-residue polypeptide: dCTP deaminase, dUMP-forming (190 aa).

Residues 101 to 106 (KSSLGR), Asp119, 127 to 129 (TLE), Gln148, Tyr162, and Gln174 contribute to the dCTP site. The active-site Proton donor/acceptor is the Glu129. The segment at 161–190 (PYGSSSVGSKYQGQRGPTPSRSYQNFVKND) is disordered. The segment covering 163–190 (GSSSVGSKYQGQRGPTPSRSYQNFVKND) has biased composition (polar residues).

The protein belongs to the dCTP deaminase family. In terms of assembly, homotrimer.

It catalyses the reaction dCTP + 2 H2O = dUMP + NH4(+) + diphosphate. It functions in the pathway pyrimidine metabolism; dUMP biosynthesis; dUMP from dCTP: step 1/1. Functionally, bifunctional enzyme that catalyzes both the deamination of dCTP to dUTP and the hydrolysis of dUTP to dUMP without releasing the toxic dUTP intermediate. This chain is dCTP deaminase, dUMP-forming, found in Mycolicibacterium vanbaalenii (strain DSM 7251 / JCM 13017 / BCRC 16820 / KCTC 9966 / NRRL B-24157 / PYR-1) (Mycobacterium vanbaalenii).